The primary structure comprises 552 residues: Glutathione reductase, chloroplastic/mitochondrial (552 aa).

Residues 1 to 60 (MNQAMATPLSLSCCSPTLTRSTLFFTKTFPFSRSFSTPLPLSTKTLISLSPPHRTFAVRA) constitute a chloroplast and mitochondrion transit peptide. The FAD site is built by S83, G84, E103, T120, C121, and K129. S83 contributes to the glutathione binding site. A disulfide bridge links C121 with C126. Y178 contacts glutathione. G194 lines the FAD pocket. The NADP(+) site is built by G254, I257, E260, R277, R283, and G341. Residues D382 and T390 each coordinate FAD. Position 420 (A420) interacts with NADP(+). Residue H515 coordinates FAD. H515 functions as the Proton acceptor in the catalytic mechanism. Positions 527-552 (TPTRKVRKNQASQGKSDSKAKAVAGS) are disordered.

The protein belongs to the class-I pyridine nucleotide-disulfide oxidoreductase family. Homodimer. It depends on FAD as a cofactor.

The protein localises to the plastid. The protein resides in the chloroplast. It localises to the mitochondrion. It carries out the reaction 2 glutathione + NADP(+) = glutathione disulfide + NADPH + H(+). Catalyzes the reduction of glutathione disulfide (GSSG) to reduced glutathione (GSH). Maintains high levels of GSH in the chloroplast. The sequence is that of Glutathione reductase, chloroplastic/mitochondrial (GR) from Pisum sativum (Garden pea).